The sequence spans 407 residues: Phospholipid-transporting ATPase accessory subunit CDC50 (407 aa).

The disordered stretch occupies residues 1–33 (MAPRRRRGAGQDGSDDGRSDSDAPKNRPPNTAF). The Cytoplasmic segment spans residues 1–48 (MAPRRRRGAGQDGSDDGRSDSDAPKNRPPNTAFRQQRMRAWQCVLTPK). The segment covering 15–25 (DDGRSDSDAPK) has biased composition (basic and acidic residues). The helical transmembrane segment at 49–69 (LIVTVFSILAAIYLGFGAWLT) threads the bilayer. Topologically, residues 70–359 (YLAHTVRDLK…TMGSRNIWPG (290 aa)) are extracellular. A disulfide bond links Cys-85 and Cys-139. Asn-131 and Asn-189 each carry an N-linked (GlcNAc...) asparagine glycan. Cysteines 193 and 210 form a disulfide. Asn-219, Asn-232, Asn-241, and Asn-314 each carry an N-linked (GlcNAc...) asparagine glycan. Residues 360 to 380 (IIFLIVGGICLVLDIYFILSF) form a helical membrane-spanning segment. Over 381-407 (FIWRPRKLGDPSYLSWNQPSAPGGHSS) the chain is Cytoplasmic.

It belongs to the CDC50/LEM3 family. As to quaternary structure, component of a flippase complex consisting of DNF1 and CDC50. Interacts with DNF1; the interaction is direct.

It is found in the cell membrane. In terms of biological role, accessory component of a P4-ATPase flippase complex which catalyzes the hydrolysis of ATP coupled to the transport of phosphatidylcholine and phosphatidylserine from the lumen to the cytosolic leaflet of membranes and ensures the maintenance of asymmetric distribution of phospholipids. The polypeptide is Phospholipid-transporting ATPase accessory subunit CDC50 (Chaetomium thermophilum (strain DSM 1495 / CBS 144.50 / IMI 039719) (Thermochaetoides thermophila)).